We begin with the raw amino-acid sequence, 598 residues long: Thiol:disulfide interchange protein DsbD (598 aa).

Residues Met1–Ala21 form the signal peptide. A disulfide bridge links Cys130 with Cys136. The segment at Thr158 to Leu180 is disordered. Polar residues predominate over residues Met159–Leu180. The next 8 helical transmembrane spans lie at Leu198–Leu220, Leu240–Leu262, Leu274–Leu296, Ala324–Ala346, Thr353–Phe375, Gly385–Glu407, Trp414–Tyr431, and Ala446–Ala468. Cys212 and Cys333 are joined by a disulfide. In terms of domain architecture, Thioredoxin spans Phe456 to Asn598. Cys513 and Cys516 form a disulfide bridge.

Belongs to the thioredoxin family. DsbD subfamily.

The protein localises to the cell inner membrane. The enzyme catalyses [protein]-dithiol + NAD(+) = [protein]-disulfide + NADH + H(+). It carries out the reaction [protein]-dithiol + NADP(+) = [protein]-disulfide + NADPH + H(+). Required to facilitate the formation of correct disulfide bonds in some periplasmic proteins and for the assembly of the periplasmic c-type cytochromes. Acts by transferring electrons from cytoplasmic thioredoxin to the periplasm. This transfer involves a cascade of disulfide bond formation and reduction steps. The sequence is that of Thiol:disulfide interchange protein DsbD from Vibrio vulnificus (strain YJ016).